We begin with the raw amino-acid sequence, 378 residues long: Acetylornithine deacetylase (378 aa).

His-76 is a binding site for Zn(2+). The active site involves Asp-78. Asp-108 lines the Zn(2+) pocket. Glu-140 is a catalytic residue. The Zn(2+) site is built by Glu-141, Glu-165, and His-351.

The protein belongs to the peptidase M20A family. ArgE subfamily. In terms of assembly, homodimer. Zn(2+) serves as cofactor. The cofactor is Co(2+). Glutathione is required as a cofactor.

Its subcellular location is the cytoplasm. It catalyses the reaction N(2)-acetyl-L-ornithine + H2O = L-ornithine + acetate. It participates in amino-acid biosynthesis; L-arginine biosynthesis; L-ornithine from N(2)-acetyl-L-ornithine (linear): step 1/1. In terms of biological role, catalyzes the hydrolysis of the amide bond of N(2)-acetylated L-amino acids. Cleaves the acetyl group from N-acetyl-L-ornithine to form L-ornithine, an intermediate in L-arginine biosynthesis pathway, and a branchpoint in the synthesis of polyamines. This chain is Acetylornithine deacetylase, found in Aliivibrio fischeri (strain ATCC 700601 / ES114) (Vibrio fischeri).